Reading from the N-terminus, the 516-residue chain is Probable 2-methylcitrate dehydratase (516 aa).

The protein belongs to the PrpD family.

The catalysed reaction is (2S,3S)-2-methylcitrate = 2-methyl-cis-aconitate + H2O. It functions in the pathway organic acid metabolism; propanoate degradation. Its function is as follows. Catalyzes the stereospecific dehydration of (2S,3S)-2-methylcitrate (2-MC) to yield the cis isomer of 2-methyl-aconitate. The chain is Probable 2-methylcitrate dehydratase (PDH1) from Saccharomyces cerevisiae (strain ATCC 204508 / S288c) (Baker's yeast).